The following is a 977-amino-acid chain: Alanine--tRNA ligase (977 aa).

Residues 512–535 (SQVDSKLQSSTPAGTGSYDSKQVS) are disordered. Residues His-618, His-622, Cys-720, and His-724 each contribute to the Zn(2+) site.

Belongs to the class-II aminoacyl-tRNA synthetase family. Zn(2+) is required as a cofactor.

It is found in the cytoplasm. The enzyme catalyses tRNA(Ala) + L-alanine + ATP = L-alanyl-tRNA(Ala) + AMP + diphosphate. In terms of biological role, catalyzes the attachment of alanine to tRNA(Ala) in a two-step reaction: alanine is first activated by ATP to form Ala-AMP and then transferred to the acceptor end of tRNA(Ala). Also edits incorrectly charged Ser-tRNA(Ala) and Gly-tRNA(Ala) via its editing domain. The chain is Alanine--tRNA ligase from Leptospira interrogans serogroup Icterohaemorrhagiae serovar copenhageni (strain Fiocruz L1-130).